Here is a 191-residue protein sequence, read N- to C-terminus: Molybdenum cofactor guanylyltransferase (191 aa).

GTP-binding positions include 13–15 (LAG), lysine 26, aspartate 72, and aspartate 102. Aspartate 102 is a binding site for Mg(2+).

This sequence belongs to the MobA family. Monomer. Mg(2+) serves as cofactor.

It is found in the cytoplasm. The catalysed reaction is Mo-molybdopterin + GTP + H(+) = Mo-molybdopterin guanine dinucleotide + diphosphate. Its function is as follows. Transfers a GMP moiety from GTP to Mo-molybdopterin (Mo-MPT) cofactor (Moco or molybdenum cofactor) to form Mo-molybdopterin guanine dinucleotide (Mo-MGD) cofactor. In Pseudomonas putida (strain ATCC 47054 / DSM 6125 / CFBP 8728 / NCIMB 11950 / KT2440), this protein is Molybdenum cofactor guanylyltransferase.